A 593-amino-acid polypeptide reads, in one-letter code: ATPase family AAA domain-containing protein 3-A (593 aa).

Positions 1–64 (MSWLFGLNKG…AKAARELDQS (64 aa)) are disordered. At 1-242 (MSWLFGLNKG…FRTFISDWDK (242 aa)) the chain is on the mitochondrial intermembrane side. Positions 15–27 (PGVPGFPEPPSPP) are enriched in pro residues. Basic and acidic residues-rich tracts occupy residues 33-44 (GGDKNKPKDKWS) and 53-64 (RAAKAARELDQS). Positions 52 to 215 (ERAAKAAREL…QIRLKAAEHR (164 aa)) form a coiled coil. The chain crosses the membrane as a helical span at residues 243-260 (VTATVAGLTLLAVGVYTA). Over 261-593 (KNATGVAGRY…LQPLLEGTQV (333 aa)) the chain is Mitochondrial matrix. 348–355 (GPPGTGKT) serves as a coordination point for ATP.

Belongs to the AAA ATPase family. Can form homooligomers. Homodimer formation at the N-terminus may be regulated by ATP and is required for the interaction with the inner surface of the mitochondrial outer membrane and correct mitochondrial homeostasis.

The protein resides in the mitochondrion inner membrane. It is found in the mitochondrion matrix. Its subcellular location is the mitochondrion nucleoid. The catalysed reaction is ATP + H2O = ADP + phosphate + H(+). Essential for mitochondrial network organization, mitochondrial metabolism and cell growth at organism and cellular level. May play an important role in mitochondrial protein synthesis. May also participate in mitochondrial DNA replication. May bind to mitochondrial DNA D-loops and contribute to nucleoid stability. Required for enhanced channeling of cholesterol for hormone-dependent steroidogenesis. Involved in mitochondrial-mediated antiviral innate immunity. Required to protect mitochondria from the PERK-mediated unfolded protein response: specifically inhibits the activity of EIF2AK3/PERK at mitochondria-endoplasmic reticulum contact sites, thereby providing a safe haven for mitochondrial protein translation during endoplasmic reticulum stress. Ability to inhibit EIF2AK3/PERK is independent of its ATPase activity. Also involved in the mitochondrial DNA damage response by promoting signaling between damaged genomes and the mitochondrial membrane, leading to activation of the integrated stress response (ISR). The chain is ATPase family AAA domain-containing protein 3-A (atad3-a) from Xenopus laevis (African clawed frog).